A 711-amino-acid chain; its full sequence is DNA topoisomerase 3 (711 aa).

The Toprim domain occupies 2–135 (KSLILAEKPS…LRRLWISSVT (134 aa)). The Mg(2+) site is built by Glu8 and Asp104. One can recognise a Topo IA-type catalytic domain in the interval 152 to 580 (YNDLYYAALA…EMKDFTKDVV (429 aa)). Residues 186–191 (SLGRVQ) form an interaction with DNA region. Tyr305 functions as the O-(5'-phospho-DNA)-tyrosine intermediate in the catalytic mechanism. The disordered stretch occupies residues 691–711 (MNKNEGLDNNPFKDALKNLNL).

Belongs to the type IA topoisomerase family. The cofactor is Mg(2+).

It catalyses the reaction ATP-independent breakage of single-stranded DNA, followed by passage and rejoining.. Its function is as follows. Releases the supercoiling and torsional tension of DNA, which is introduced during the DNA replication and transcription, by transiently cleaving and rejoining one strand of the DNA duplex. Introduces a single-strand break via transesterification at a target site in duplex DNA. The scissile phosphodiester is attacked by the catalytic tyrosine of the enzyme, resulting in the formation of a DNA-(5'-phosphotyrosyl)-enzyme intermediate and the expulsion of a 3'-OH DNA strand. The free DNA strand then undergoes passage around the unbroken strand, thus removing DNA supercoils. Finally, in the religation step, the DNA 3'-OH attacks the covalent intermediate to expel the active-site tyrosine and restore the DNA phosphodiester backbone. This is DNA topoisomerase 3 from Staphylococcus aureus (strain MRSA252).